We begin with the raw amino-acid sequence, 27 residues long: Weak neurotoxin E3 (27 aa).

In terms of tissue distribution, expressed by the venom gland.

It localises to the secreted. Binds to muscle nicotinic acetylcholine receptor (nAChR) and inhibit acetylcholine from binding to the receptor, thereby impairing neuromuscular transmission. In Micrurus pyrrhocryptus (Coral snake), this protein is Weak neurotoxin E3.